A 242-amino-acid polypeptide reads, in one-letter code: ATP synthase subunit a (242 aa).

7 helical membrane passes run 23 to 43 (ISFTNCALFMILASLVSAVLL), 62 to 82 (VELIYNFVVGAIESNAGVGGL), 84 to 104 (YIPFVLSIFLFVLACNIIGIL), 113 to 133 (HVSVTLALSVVVCASVTVLGF), 143 to 163 (IFLPEGTPLWLAPMMVFIKLF), 176 to 196 (LAANMIAGHTIIAVIAEFVLK), and 201 to 221 (LAPLPFAFIMVLIAFEIFVAI).

This sequence belongs to the ATPase A chain family. In terms of assembly, F-type ATPases have 2 components, CF(1) - the catalytic core - and CF(0) - the membrane proton channel. CF(1) has five subunits: alpha(3), beta(3), gamma(1), delta(1), epsilon(1). CF(0) has three main subunits: a(1), b(2) and c(9-12). The alpha and beta chains form an alternating ring which encloses part of the gamma chain. CF(1) is attached to CF(0) by a central stalk formed by the gamma and epsilon chains, while a peripheral stalk is formed by the delta and b chains.

The protein resides in the cell inner membrane. Its function is as follows. Key component of the proton channel; it plays a direct role in the translocation of protons across the membrane. This chain is ATP synthase subunit a, found in Anaplasma phagocytophilum (strain HZ).